The sequence spans 854 residues: Fibroblast growth factor receptor 1 (854 aa).

The signal sequence occupies residues 1 to 20 (MSGLFFLLSELLILLGKINS). Residues 21-383 (VSKKSLCHPE…NFFMNSVPLS (363 aa)) are Extracellular-facing. Residues 29-120 (PELFKIDNKL…SSVFFLINVT (92 aa)) enclose the Ig-like C2-type 1 domain. A disulfide bridge links cysteine 50 with cysteine 102. Residues asparagine 95, asparagine 99, asparagine 110, asparagine 118, asparagine 140, asparagine 175, asparagine 202, asparagine 248, asparagine 283, asparagine 317, and asparagine 346 are each glycosylated (N-linked (GlcNAc...) asparagine). 2 consecutive Ig-like C2-type domains span residues 147 to 259 (PEMG…FTFT) and 268 to 369 (PHLT…LSVI). An intrachain disulfide couples cysteine 166 to cysteine 242. Cysteine 288 and cysteine 353 are oxidised to a cystine. Residues 384–404 (IFLVIGFFVAIILLSLIIYCF) traverse the membrane as a helical segment. Over 405–854 (FLQYKNAVDS…SDYLEPKCLV (450 aa)) the chain is Cytoplasmic. Positions 551 to 822 (KITNKKLGEG…EIVEILIDII (272 aa)) constitute a Protein kinase domain. Residues 557-565 (LGEGAFGMV) and lysine 585 each bind ATP. Catalysis depends on aspartate 689, which acts as the Proton acceptor. Position 718 is a phosphotyrosine; by autocatalysis (tyrosine 718).

Belongs to the protein kinase superfamily. Tyr protein kinase family. Fibroblast growth factor receptor subfamily. In terms of tissue distribution, expressed in brain, stem cells and the mesenchymal cells.

Its subcellular location is the membrane. It carries out the reaction L-tyrosyl-[protein] + ATP = O-phospho-L-tyrosyl-[protein] + ADP + H(+). Receptor for basic fibroblast growth factor. In Dugesia japonica (Planarian), this protein is Fibroblast growth factor receptor 1 (FGFR1).